The sequence spans 488 residues: Cobyric acid synthase (488 aa).

In terms of domain architecture, GATase cobBQ-type spans 255–442 (ALKIAVPVLP…LHGLFGSDAY (188 aa)). Cys337 (nucleophile) is an active-site residue. The active site involves His434.

Belongs to the CobB/CobQ family. CobQ subfamily.

It functions in the pathway cofactor biosynthesis; adenosylcobalamin biosynthesis. Catalyzes amidations at positions B, D, E, and G on adenosylcobyrinic A,C-diamide. NH(2) groups are provided by glutamine, and one molecule of ATP is hydrogenolyzed for each amidation. The sequence is that of Cobyric acid synthase from Rhizobium johnstonii (strain DSM 114642 / LMG 32736 / 3841) (Rhizobium leguminosarum bv. viciae).